The sequence spans 153 residues: uncharacterized protein (153 aa).

The protein localises to the mitochondrion. This is an uncharacterized protein from Arabidopsis thaliana (Mouse-ear cress).